The chain runs to 383 residues: S-adenosylmethionine synthase (383 aa).

His-15 is an ATP binding site. Residue Asp-17 coordinates Mg(2+). Glu-43 is a binding site for K(+). L-methionine contacts are provided by Glu-56 and Gln-99. Residues 99-109 are flexible loop; sequence QSPDINQGVDR. ATP-binding positions include 164–166, 230–231, Asp-239, 245–246, Ala-262, and Lys-266; these read DAK, RF, and RK. Asp-239 is a binding site for L-methionine. Residue Lys-270 participates in L-methionine binding.

It belongs to the AdoMet synthase family. In terms of assembly, homotetramer; dimer of dimers. Requires Mg(2+) as cofactor. The cofactor is K(+).

Its subcellular location is the cytoplasm. The catalysed reaction is L-methionine + ATP + H2O = S-adenosyl-L-methionine + phosphate + diphosphate. Its pathway is amino-acid biosynthesis; S-adenosyl-L-methionine biosynthesis; S-adenosyl-L-methionine from L-methionine: step 1/1. Functionally, catalyzes the formation of S-adenosylmethionine (AdoMet) from methionine and ATP. The overall synthetic reaction is composed of two sequential steps, AdoMet formation and the subsequent tripolyphosphate hydrolysis which occurs prior to release of AdoMet from the enzyme. In Shewanella putrefaciens (strain CN-32 / ATCC BAA-453), this protein is S-adenosylmethionine synthase.